We begin with the raw amino-acid sequence, 35 residues long: Mu/omega-theraphotoxin-Tap1a (35 aa).

3 cysteine pairs are disulfide-bonded: Cys3-Cys18, Cys10-Cys23, and Cys17-Cys30.

It belongs to the neurotoxin 10 (Hwtx-1) family. 59 (Tltx) subfamily. Expressed by the venom gland.

The protein resides in the secreted. Functionally, gating-modifier toxin that inhibits both sodium (Nav) and calcium (Cav3) channels by inducing hyperpolarizing shift in voltage-dependence of activation and steady state inactivation. Inhibits Nav1.1/SCN1A, Nav1.2/SCN2A, Nav1.3/SCN3A, Nav1.6/SCN6A, Nav1.7/SCN9A and Cav3.1/CACNA1G sodium and calcium channels at nanomolar concentrations (IC(50)=81-301 nM). Surprisingly, selectively slows fast inactivation of Nav1.3/SCN3A. Also shows moderate inhibition of Cav3.2/CACNA1H calcium channels (IC(50)=1233 nM). Ex vivo, nearly ablates neuronal mechanosensitivity in afferent fibers innervating the colon and the bladder. In vivo, in a mouse model of irritable bowel syndrome, intracolonic administration of the toxin reverses colonic mechanical hypersensitivity. The sequence is that of Mu/omega-theraphotoxin-Tap1a from Theraphosa apophysis (Goliath pinkfoot tarantula).